Here is a 489-residue protein sequence, read N- to C-terminus: Rhamnulokinase (489 aa).

13-17 (ASSGR) is a binding site for ATP. Residues C68 and C222 are joined by a disulfide bond. Substrate is bound by residues G83 and 236–238 (HDT). D237 (proton acceptor) is an active-site residue. T259 contributes to the ATP binding site. A substrate-binding site is contributed by N296. Position 304 (Q304) interacts with ATP. A disulfide bridge links C353 with C370. Residue G402 coordinates ATP. Residues C413 and C417 are joined by a disulfide bond.

This sequence belongs to the rhamnulokinase family. Mg(2+) is required as a cofactor.

It carries out the reaction L-rhamnulose + ATP = L-rhamnulose 1-phosphate + ADP + H(+). It participates in carbohydrate degradation; L-rhamnose degradation; glycerone phosphate from L-rhamnose: step 2/3. Functionally, involved in the catabolism of L-rhamnose (6-deoxy-L-mannose). Catalyzes the transfer of the gamma-phosphate group from ATP to the 1-hydroxyl group of L-rhamnulose to yield L-rhamnulose 1-phosphate. This is Rhamnulokinase from Salmonella paratyphi B (strain ATCC BAA-1250 / SPB7).